The sequence spans 306 residues: MKRDFVDLWDLSPKEAWEIVKKTLKVKKGEEELGKPLSGKTIALLFTKPSTRTRVSFEVGIYQLGGNSLFFQEKELQVSRGEDVRDTARTLSKYVDGVIVRNHSHTWLKEFANFASVPVINALTNMSHPCQILSDVFTLYEHYGEELKNLKVAYVGDGNNVCNTLMVGAGMFGLKLFVATPEGYEPNSYYYKKALEFSKENGGSVELTNNPVESVKDADVVYTDVWVSMGEENKNIEAFLPYQVNEKLLSFAKSSVKVMHCLPAKKGQEITEEVFEKNADFIFTQAENRLHTQKTLMEFLFREPQA.

Carbamoyl phosphate is bound by residues 50–53, glutamine 77, arginine 101, and 128–131; these read STRT and HPCQ. Residues asparagine 160, aspartate 224, and 228–229 each bind L-ornithine; that span reads SM. Carbamoyl phosphate-binding positions include 261–262 and arginine 289; that span reads CL.

Belongs to the aspartate/ornithine carbamoyltransferase superfamily. OTCase family.

It localises to the cytoplasm. The enzyme catalyses carbamoyl phosphate + L-ornithine = L-citrulline + phosphate + H(+). The protein operates within amino-acid biosynthesis; L-arginine biosynthesis; L-arginine from L-ornithine and carbamoyl phosphate: step 1/3. Its function is as follows. Reversibly catalyzes the transfer of the carbamoyl group from carbamoyl phosphate (CP) to the N(epsilon) atom of ornithine (ORN) to produce L-citrulline. This Aquifex aeolicus (strain VF5) protein is Ornithine carbamoyltransferase.